We begin with the raw amino-acid sequence, 462 residues long: Argininosuccinate lyase (462 aa).

It belongs to the lyase 1 family. Argininosuccinate lyase subfamily.

Its subcellular location is the cytoplasm. It carries out the reaction 2-(N(omega)-L-arginino)succinate = fumarate + L-arginine. It participates in amino-acid biosynthesis; L-arginine biosynthesis; L-arginine from L-ornithine and carbamoyl phosphate: step 3/3. In Lachnoclostridium phytofermentans (strain ATCC 700394 / DSM 18823 / ISDg) (Clostridium phytofermentans), this protein is Argininosuccinate lyase.